A 712-amino-acid polypeptide reads, in one-letter code: DNA ligase (712 aa).

Residues 53 to 57, 103 to 104, and Glu-133 contribute to the NAD(+) site; these read DAEFD and SL. Residue Lys-135 is the N6-AMP-lysine intermediate of the active site. 4 residues coordinate NAD(+): Arg-156, Glu-196, Lys-315, and Lys-339. Positions 433, 436, 452, and 458 each coordinate Zn(2+). One can recognise a BRCT domain in the interval 622 to 711; the sequence is SIERTLEGLS…PERDAEDGEP (90 aa).

This sequence belongs to the NAD-dependent DNA ligase family. LigA subfamily. Mg(2+) is required as a cofactor. Mn(2+) serves as cofactor.

The catalysed reaction is NAD(+) + (deoxyribonucleotide)n-3'-hydroxyl + 5'-phospho-(deoxyribonucleotide)m = (deoxyribonucleotide)n+m + AMP + beta-nicotinamide D-nucleotide.. DNA ligase that catalyzes the formation of phosphodiester linkages between 5'-phosphoryl and 3'-hydroxyl groups in double-stranded DNA using NAD as a coenzyme and as the energy source for the reaction. It is essential for DNA replication and repair of damaged DNA. The protein is DNA ligase of Mycolicibacterium gilvum (strain PYR-GCK) (Mycobacterium gilvum (strain PYR-GCK)).